The chain runs to 81 residues: MAKTVLGIHVTFLTLLFAVLLLNDVMYTPVEKICERASGTWKGICIHSNDCNNQCVKWENAGSGSCHYQFPNYMCFCYFDC.

The signal sequence occupies residues 1–31 (MAKTVLGIHVTFLTLLFAVLLLNDVMYTPVE). Disulfide bonds link cysteine 34-cysteine 81, cysteine 45-cysteine 66, cysteine 51-cysteine 75, and cysteine 55-cysteine 77.

In terms of biological role, antimicrobial peptide probably active against fungi like B.sorokiniana, F.oxysporum, F.graminearum, F.avenaceum, B.cinerea, P.beta, P.infestans and P.debaryanum. In Stellaria media (Common chickweed), this protein is Antimicrobial peptide D1.